Reading from the N-terminus, the 288-residue chain is Cyclic UMP-AMP synthase (288 aa).

Residues 1–23 are disordered; it reads MPVPESQLERWSHQGATTTAKKT. Residue Gln46 coordinates UTP. 46–48 contributes to the ATP binding site; the sequence is QGS. The Mg(2+) site is built by Asp60 and Asp62. UTP contacts are provided by residues Asp62 and 116–120; that span reads RKTLK. Asp129 is a Mg(2+) binding site. Asn166 contributes to the UTP binding site. ATP is bound by residues Lys194, Ser212, and Glu265.

Belongs to the CD-NTase family. E01 subfamily. The cofactor is Mg(2+).

The enzyme catalyses UTP + ATP = 3',3'-cUAMP + 2 diphosphate. In terms of biological role, cyclic nucleotide synthase (second messenger synthase) of a CBASS antivirus system. CBASS (cyclic oligonucleotide-based antiphage signaling system) provides immunity against bacteriophage. The CD-NTase protein synthesizes cyclic nucleotides in response to infection; these serve as specific second messenger signals. The signals activate a diverse range of effectors, leading to bacterial cell death and thus abortive phage infection. A type I-B(UU) CBASS system. Functionally, cyclic dinucleotide synthase that catalyzes the synthesis of 3'3'-cyclic UMP-AMP (cUMP-AMP) from UTP and ATP, a second messenger for cell signal transduction. The polypeptide is Cyclic UMP-AMP synthase (Rhodothermus marinus (strain SG0.5JP17-172)).